Reading from the N-terminus, the 490-residue chain is ATP synthase subunit beta, chloroplastic (490 aa).

Residue 169-176 (GGAGVGKT) participates in ATP binding.

This sequence belongs to the ATPase alpha/beta chains family. F-type ATPases have 2 components, CF(1) - the catalytic core - and CF(0) - the membrane proton channel. CF(1) has five subunits: alpha(3), beta(3), gamma(1), delta(1), epsilon(1). CF(0) has four main subunits: a(1), b(1), b'(1) and c(9-12).

The protein localises to the plastid. Its subcellular location is the chloroplast thylakoid membrane. The enzyme catalyses ATP + H2O + 4 H(+)(in) = ADP + phosphate + 5 H(+)(out). Its function is as follows. Produces ATP from ADP in the presence of a proton gradient across the membrane. The catalytic sites are hosted primarily by the beta subunits. In Cyanidium caldarium (Red alga), this protein is ATP synthase subunit beta, chloroplastic.